The following is a 224-amino-acid chain: Germin-like protein 8-5 (224 aa).

An N-terminal signal peptide occupies residues 1-22 (MASPSSLCLLAALALISWQAMA). An intrachain disulfide couples Cys32 to Cys47. Positions 62-212 (AKLDTPRKTN…AFQVEKGTID (151 aa)) constitute a Cupin type-1 domain. The N-linked (GlcNAc...) asparagine glycan is linked to Asn76. Positions 109, 111, and 116 each coordinate Mn(2+). Residue Asn135 is glycosylated (N-linked (GlcNAc...) asparagine). Residue His157 participates in Mn(2+) binding.

It belongs to the germin family. In terms of assembly, oligomer (believed to be a pentamer but probably hexamer).

It localises to the secreted. It is found in the extracellular space. Its subcellular location is the apoplast. Its function is as follows. Plays a role in broad-spectrum disease resistance. Probably has no oxalate oxidase activity even if the active site is conserved. The protein is Germin-like protein 8-5 of Oryza sativa subsp. japonica (Rice).